We begin with the raw amino-acid sequence, 215 residues long: Small ribosomal subunit protein uS7 (215 aa).

Belongs to the universal ribosomal protein uS7 family. In terms of assembly, part of the 30S ribosomal subunit.

Functionally, one of the primary rRNA binding proteins, it binds directly to 16S rRNA where it nucleates assembly of the head domain of the 30S subunit. Is located at the subunit interface close to the decoding center. The protein is Small ribosomal subunit protein uS7 of Thermococcus gammatolerans (strain DSM 15229 / JCM 11827 / EJ3).